Reading from the N-terminus, the 329-residue chain is Diaminopimelate epimerase (329 aa).

Residues Asn14 and Asn73 each contribute to the substrate site. Cys82 functions as the Proton donor in the catalytic mechanism. Substrate-binding positions include 83–84 (GN), Asn170, Asn206, and 224–225 (ER). Cys233 functions as the Proton acceptor in the catalytic mechanism. 234 to 235 (GT) contributes to the substrate binding site.

The protein belongs to the diaminopimelate epimerase family. As to quaternary structure, homodimer.

The protein localises to the cytoplasm. The enzyme catalyses (2S,6S)-2,6-diaminopimelate = meso-2,6-diaminopimelate. The protein operates within amino-acid biosynthesis; L-lysine biosynthesis via DAP pathway; DL-2,6-diaminopimelate from LL-2,6-diaminopimelate: step 1/1. In terms of biological role, catalyzes the stereoinversion of LL-2,6-diaminopimelate (L,L-DAP) to meso-diaminopimelate (meso-DAP), a precursor of L-lysine and an essential component of the bacterial peptidoglycan. The polypeptide is Diaminopimelate epimerase (Listeria monocytogenes serotype 4b (strain F2365)).